An 801-amino-acid chain; its full sequence is Elongation factor G, mitochondrial (801 aa).

The N-terminal 62 residues, 1–62 (MRTPTLARLP…LSKHFQQRRN (62 aa)), are a transit peptide targeting the mitochondrion. Residues 99–386 (SRVRNIGIAA…GVIDYLPNPS (288 aa)) enclose the tr-type G domain. GTP is bound by residues 108–115 (AHIDSGKT), 184–188 (DTPGH), and 238–241 (NKMD).

The protein belongs to the TRAFAC class translation factor GTPase superfamily. Classic translation factor GTPase family. EF-G/EF-2 subfamily.

The protein resides in the mitochondrion. It functions in the pathway protein biosynthesis; polypeptide chain elongation. Functionally, mitochondrial GTPase that catalyzes the GTP-dependent ribosomal translocation step during translation elongation. During this step, the ribosome changes from the pre-translocational (PRE) to the post-translocational (POST) state as the newly formed A-site-bound peptidyl-tRNA and P-site-bound deacylated tRNA move to the P and E sites, respectively. Catalyzes the coordinated movement of the two tRNA molecules, the mRNA and conformational changes in the ribosome. This is Elongation factor G, mitochondrial (mef1) from Aspergillus niger (strain ATCC MYA-4892 / CBS 513.88 / FGSC A1513).